A 50-amino-acid chain; its full sequence is uncharacterized protein (50 aa).

This is an uncharacterized protein from Dryophytes versicolor (chameleon treefrog).